The following is a 178-amino-acid chain: Transcription termination/antitermination protein NusG (178 aa).

One can recognise a KOW domain in the interval 126 to 156 (VGQQVRVNEGPFADFNGVVEEVNYERNKLRV).

This sequence belongs to the NusG family.

Its function is as follows. Participates in transcription elongation, termination and antitermination. The chain is Transcription termination/antitermination protein NusG from Neisseria meningitidis serogroup B (strain ATCC BAA-335 / MC58).